A 108-amino-acid polypeptide reads, in one-letter code: Large ribosomal subunit protein uL24 (108 aa).

This sequence belongs to the universal ribosomal protein uL24 family. As to quaternary structure, part of the 50S ribosomal subunit.

Functionally, one of two assembly initiator proteins, it binds directly to the 5'-end of the 23S rRNA, where it nucleates assembly of the 50S subunit. Its function is as follows. One of the proteins that surrounds the polypeptide exit tunnel on the outside of the subunit. The polypeptide is Large ribosomal subunit protein uL24 (Mycoplasma mycoides subsp. mycoides SC (strain CCUG 32753 / NCTC 10114 / PG1)).